The sequence spans 263 residues: Isatin hydrolase (263 aa).

62-66 (FFAWN) contacts substrate. His73, His77, and Asp79 together coordinate Mn(2+). The Proton donor/acceptor role is filled by His83. Residue His212 coordinates substrate.

The protein belongs to the Cyclase 1 superfamily. As to quaternary structure, homodimer. The cofactor is Mn(2+).

It carries out the reaction isatin + H2O = isatinate + H(+). Its activity is regulated as follows. Inhibited by thioisatinate. Its function is as follows. Involved in the degradation of the plant hormone indole-3-acetic acid (IAA). Catalyzes the hydrolysis of the cyclic amide bond (lactam) of isatin (1H-indole-2,3-dione) to yield isatinate (2-(2-aminophenyl)-2-oxoacetate). This chain is Isatin hydrolase, found in Roseibium aggregatum (strain ATCC 25650 / DSM 13394 / JCM 20685 / NBRC 16684 / NCIMB 2208 / IAM 12614 / B1) (Stappia aggregata).